The chain runs to 48 residues: MTKIPINIPATSGKIKFGITPSSNKSPSLSPSPSNGQLGGGRGYILEP.

Residues 1-48 (MTKIPINIPATSGKIKFGITPSSNKSPSLSPSPSNGQLGGGRGYILEP) are disordered. Residues 21-36 (PSSNKSPSLSPSPSNG) show a composition bias toward low complexity. A compositionally biased stretch (gly residues) spans 37-48 (QLGGGRGYILEP).

This is an uncharacterized protein from Dictyostelium discoideum (Social amoeba).